Here is a 1184-residue protein sequence, read N- to C-terminus: Cartilage intermediate layer protein 1 (1184 aa).

The first 21 residues, 1-21 (MVGTKAWVFSFLVLEVTSVLG), serve as a signal peptide directing secretion. Residues asparagine 129 and asparagine 132 are each glycosylated (N-linked (GlcNAc...) asparagine). In terms of domain architecture, TSP type-1 spans 149-201 (ERIWSPWSPWSKCSAACGQTGVQTRTRICLAEMVSLCSEASEEGQHCMGQDCT). 4 disulfide bridges follow: cysteine 161–cysteine 195, cysteine 165–cysteine 200, cysteine 177–cysteine 185, and cysteine 330–cysteine 376. The 87-residue stretch at 309–395 (PYMVMNPETK…KSKVAQLIVI (87 aa)) folds into the Ig-like C2-type domain. 6 N-linked (GlcNAc...) asparagine glycosylation sites follow: asparagine 346, asparagine 420, asparagine 550, asparagine 631, asparagine 1000, and asparagine 1056. The disordered stretch occupies residues 1136–1170 (TPAQSPAAGTVQGRVPSRRQQRASRGGQRQGGVVA). The segment covering 1158–1170 (ASRGGQRQGGVVA) has biased composition (low complexity).

As to quaternary structure, monomer. Interacts with TGFB1. Cleaved into 2 chains possibly by a furin-like protease upon or preceding secretion. As to expression, specifically expressed in cartilage. Localizes in the intermediates layer of articular cartilage but neither in the superficial nor in the deepest regions. Specifically and highly expressed in intervertebral disk tissue. Expression increases with aging in hip articular cartilage. Overexpressed in articular hyaline cartilage from patients with calcium pyrophosphate dihydrate crystal deposition disease (CPPD). Expression in intervertebral disk tissue from individuals with lumbar disk disease increases as disk degeneration progresses.

It is found in the secreted. The protein resides in the extracellular space. The protein localises to the extracellular matrix. Probably plays a role in cartilage scaffolding. May act by antagonizing TGF-beta1 (TGFB1) and IGF1 functions. Has the ability to suppress IGF1-induced proliferation and sulfated proteoglycan synthesis, and inhibits ligand-induced IGF1R autophosphorylation. May inhibit TGFB1-mediated induction of cartilage matrix genes via its interaction with TGFB1. Overexpression may lead to impair chondrocyte growth and matrix repair and indirectly promote inorganic pyrophosphate (PPi) supersaturation in aging and osteoarthritis cartilage. This is Cartilage intermediate layer protein 1 (CILP) from Homo sapiens (Human).